The chain runs to 221 residues: MTEETPGFDEKPDVPSGATPEDAEPKAAPSEGAAPAGDAAAAAQTAAQTAGLTAQLDQVRTALGERTADLQRLQAEYQNYRRRVERDRIAVKEIAIANLLTELLPTLDDIGRAREHGELVGGFKSVAESLETVAAKMGLQQFGKEGEPFDPTIHEALMHSYAPDVTETTCVAILQPGYRIGERTIRPARVAVAEPQPGAQTVKADEAEAADDKESGGPEEG.

Disordered stretches follow at residues 1 to 44 and 192 to 221; these read MTEE…AAAQ and VAEP…PEEG. A compositionally biased stretch (low complexity) spans 26–44; that stretch reads KAAPSEGAAPAGDAAAAAQ. Basic and acidic residues predominate over residues 203–221; that stretch reads KADEAEAADDKESGGPEEG.

This sequence belongs to the GrpE family. In terms of assembly, homodimer.

It localises to the cytoplasm. In terms of biological role, participates actively in the response to hyperosmotic and heat shock by preventing the aggregation of stress-denatured proteins, in association with DnaK and GrpE. It is the nucleotide exchange factor for DnaK and may function as a thermosensor. Unfolded proteins bind initially to DnaJ; upon interaction with the DnaJ-bound protein, DnaK hydrolyzes its bound ATP, resulting in the formation of a stable complex. GrpE releases ADP from DnaK; ATP binding to DnaK triggers the release of the substrate protein, thus completing the reaction cycle. Several rounds of ATP-dependent interactions between DnaJ, DnaK and GrpE are required for fully efficient folding. In Streptomyces avermitilis (strain ATCC 31267 / DSM 46492 / JCM 5070 / NBRC 14893 / NCIMB 12804 / NRRL 8165 / MA-4680), this protein is Protein GrpE 1.